Here is a 279-residue protein sequence, read N- to C-terminus: Undecaprenyl-diphosphatase (279 aa).

8 helical membrane passes run Leu2–Leu22, Ala44–Ile64, Trp85–Leu105, Phe113–Ile133, Val163–Leu183, Thr188–Leu208, Leu225–Leu245, and Phe255–Phe275.

This sequence belongs to the UppP family.

The protein resides in the cell membrane. It carries out the reaction di-trans,octa-cis-undecaprenyl diphosphate + H2O = di-trans,octa-cis-undecaprenyl phosphate + phosphate + H(+). In terms of biological role, catalyzes the dephosphorylation of undecaprenyl diphosphate (UPP). Confers resistance to bacitracin. This Streptococcus equi subsp. zooepidemicus (strain MGCS10565) protein is Undecaprenyl-diphosphatase.